A 258-amino-acid polypeptide reads, in one-letter code: UPF0246 protein YaaA (258 aa).

It belongs to the UPF0246 family.

This is UPF0246 protein YaaA from Escherichia coli O7:K1 (strain IAI39 / ExPEC).